A 936-amino-acid chain; its full sequence is Calcium homeostasis endoplasmic reticulum protein (936 aa).

An N-acetylmethionine modification is found at methionine 1. The SURP motif repeat unit spans residues valine 15 to lysine 57. An N6-acetyllysine modification is found at lysine 18. The segment at glutamate 77–threonine 102 is disordered. Positions alanine 81 to alanine 91 are enriched in pro residues. The CID domain maps to glutamate 149–glycine 289. Residues leucine 328–aspartate 646 are disordered. The span at glutamine 330–glutamine 355 shows a compositional bias: low complexity. The segment covering threonine 363–threonine 383 has biased composition (pro residues). Over residues proline 395 to glycine 405 the composition is skewed to polar residues. The span at proline 488 to glutamine 500 shows a compositional bias: low complexity. Over residues proline 534–proline 550 the composition is skewed to pro residues. Positions histidine 551 to phenylalanine 560 are enriched in low complexity. The span at methionine 561 to glutamate 572 shows a compositional bias: basic and acidic residues. Positions proline 594–proline 603 are enriched in basic residues. A Phosphotyrosine modification is found at tyrosine 723. Residues arginine 731–aspartate 887 are disordered. Residues serine 748 to serine 758 show a composition bias toward basic residues. The segment covering serine 759–serine 773 has biased composition (low complexity). The segment covering serine 774–serine 824 has biased composition (basic residues). Residues serine 822, serine 824, and serine 826 each carry the phosphoserine modification. Threonine 828 carries the post-translational modification Phosphothreonine. Serine 837 bears the Phosphoserine mark. A G-patch domain is found at glutamate 850–aspartate 900. A Glycyl lysine isopeptide (Lys-Gly) (interchain with G-Cter in SUMO2) cross-link involves residue lysine 853. A phosphoserine mark is found at serine 864 and serine 866. A Glycyl lysine isopeptide (Lys-Gly) (interchain with G-Cter in SUMO2) cross-link involves residue lysine 881. N6-acetyllysine is present on lysine 888. Residue serine 913 is modified to Phosphoserine.

The protein resides in the cytoplasm. It localises to the perinuclear region. The protein localises to the endoplasmic reticulum. Its function is as follows. Involved in calcium homeostasis, growth and proliferation. The chain is Calcium homeostasis endoplasmic reticulum protein from Mus musculus (Mouse).